The sequence spans 341 residues: Nicotinate-nucleotide--dimethylbenzimidazole phosphoribosyltransferase (341 aa).

The Proton acceptor role is filled by Glu-310.

The protein belongs to the CobT family.

The enzyme catalyses 5,6-dimethylbenzimidazole + nicotinate beta-D-ribonucleotide = alpha-ribazole 5'-phosphate + nicotinate + H(+). Its pathway is nucleoside biosynthesis; alpha-ribazole biosynthesis; alpha-ribazole from 5,6-dimethylbenzimidazole: step 1/2. Functionally, catalyzes the synthesis of alpha-ribazole-5'-phosphate from nicotinate mononucleotide (NAMN) and 5,6-dimethylbenzimidazole (DMB). The polypeptide is Nicotinate-nucleotide--dimethylbenzimidazole phosphoribosyltransferase (Vibrio cholerae serotype O1 (strain ATCC 39315 / El Tor Inaba N16961)).